The chain runs to 191 residues: Crossover junction endodeoxyribonuclease RuvC (191 aa).

Residues Asp7, Glu67, and Asp140 contribute to the active site. Mg(2+) is bound by residues Asp7, Glu67, and Asp140.

This sequence belongs to the RuvC family. As to quaternary structure, homodimer which binds Holliday junction (HJ) DNA. The HJ becomes 2-fold symmetrical on binding to RuvC with unstacked arms; it has a different conformation from HJ DNA in complex with RuvA. In the full resolvosome a probable DNA-RuvA(4)-RuvB(12)-RuvC(2) complex forms which resolves the HJ. Requires Mg(2+) as cofactor.

It is found in the cytoplasm. The catalysed reaction is Endonucleolytic cleavage at a junction such as a reciprocal single-stranded crossover between two homologous DNA duplexes (Holliday junction).. Functionally, the RuvA-RuvB-RuvC complex processes Holliday junction (HJ) DNA during genetic recombination and DNA repair. Endonuclease that resolves HJ intermediates. Cleaves cruciform DNA by making single-stranded nicks across the HJ at symmetrical positions within the homologous arms, yielding a 5'-phosphate and a 3'-hydroxyl group; requires a central core of homology in the junction. The consensus cleavage sequence is 5'-(A/T)TT(C/G)-3'. Cleavage occurs on the 3'-side of the TT dinucleotide at the point of strand exchange. HJ branch migration catalyzed by RuvA-RuvB allows RuvC to scan DNA until it finds its consensus sequence, where it cleaves and resolves the cruciform DNA. This is Crossover junction endodeoxyribonuclease RuvC from Pelodictyon phaeoclathratiforme (strain DSM 5477 / BU-1).